A 295-amino-acid polypeptide reads, in one-letter code: Protoheme IX farnesyltransferase (295 aa).

Helical transmembrane passes span 27 to 46 (IMYL…PGSI), 50 to 72 (IAII…NMWY), 93 to 115 (ISKS…VMMI), 119 to 136 (YISG…SFAY), 148 to 168 (IVIG…SVTS), 175 to 195 (LILF…LSLL), 219 to 239 (VHIL…GLFL), 244 to 264 (LYEI…FKVF), and 275 to 295 (MFTY…LASF).

Belongs to the UbiA prenyltransferase family. Protoheme IX farnesyltransferase subfamily.

It is found in the cell inner membrane. The enzyme catalyses heme b + (2E,6E)-farnesyl diphosphate + H2O = Fe(II)-heme o + diphosphate. It functions in the pathway porphyrin-containing compound metabolism; heme O biosynthesis; heme O from protoheme: step 1/1. Its function is as follows. Converts heme B (protoheme IX) to heme O by substitution of the vinyl group on carbon 2 of heme B porphyrin ring with a hydroxyethyl farnesyl side group. The chain is Protoheme IX farnesyltransferase from Ehrlichia canis (strain Jake).